The primary structure comprises 63 residues: Large ribosomal subunit protein bL35 (63 aa).

Belongs to the bacterial ribosomal protein bL35 family.

The sequence is that of Large ribosomal subunit protein bL35 from Finegoldia magna (strain ATCC 29328 / DSM 20472 / WAL 2508) (Peptostreptococcus magnus).